Reading from the N-terminus, the 506-residue chain is Transforming growth factor beta-1-induced transcript 1 protein (506 aa).

An LD motif 1 motif is present at residues 3 to 15 (DLDALLADLQITT). The disordered stretch occupies residues 15 to 62 (TPPRCPVLLTDSPEKPQPTETRPPPPPYDPKTAMSNKTSDHETFPVDK). The span at 52–62 (TSDHETFPVDK) shows a compositional bias: basic and acidic residues. 2 consecutive short sequence motifs (LD motif) follow at residues 87 to 99 (ELDR…NATQ) and 139 to 150 (ELDRLMASLSDF). Disordered regions lie at residues 154-201 (NTVS…PTPK) and 221-244 (SDEV…ATSV). Over residues 168–177 (GSEEVSRPGD) the composition is skewed to basic and acidic residues. The LD motif 4 motif lies at 248 to 260 (DLDSMLVKLQSGL). LIM zinc-binding domains lie at 271–330 (GLCE…LYAP), 331–388 (RCAL…RLFG), 389–448 (AVCA…RRGS), and 449–506 (LCAG…RLYG).

This sequence belongs to the paxillin family. As to quaternary structure, interacts with tcf3 and tcf7l2.

It is found in the cell junction. The protein resides in the focal adhesion. The protein localises to the nucleus matrix. It localises to the cytoplasm. Its subcellular location is the cytoskeleton. Its function is as follows. Functions as a molecular adapter coordinating multiple protein-protein interactions at the focal adhesion complex and in the nucleus. May regulate both Wnt and steroid signaling pathways and play a role in the processes of cell growth, proliferation, migration, differentiation and senescence. May have a zinc-dependent DNA-binding activity. The protein is Transforming growth factor beta-1-induced transcript 1 protein (tgfb1i1) of Xenopus laevis (African clawed frog).